Reading from the N-terminus, the 1042-residue chain is Glutamate dehydrogenase 2 (1042 aa).

Lys596 is a catalytic residue. Arg763 is subject to ADP-ribosylarginine; by Legionella Lart1.

It belongs to the Glu/Leu/Phe/Val dehydrogenases family. Homodimer. (Microbial infection) ADP-ribosylated at Arg-763 by the Legionella pneumophila effector Lart1, which inhibits the glutamate dehydrogenase activity. Amoeba are natural hosts of Legionella, and ADP-ribosylation by Lart1 may promote Legionella parasitism.

It localises to the cytoplasm. It carries out the reaction L-glutamate + NAD(+) + H2O = 2-oxoglutarate + NH4(+) + NADH + H(+). With respect to regulation, activity is stimulated by AMP. (Microbial infection) Inhibited by ADP-ribosylation. In Dictyostelium discoideum (Social amoeba), this protein is Glutamate dehydrogenase 2 (glud2).